The primary structure comprises 315 residues: 4-hydroxy-3-methylbut-2-enyl diphosphate reductase (315 aa).

Cys12 provides a ligand contact to [4Fe-4S] cluster. Residues His43 and His81 each coordinate (2E)-4-hydroxy-3-methylbut-2-enyl diphosphate. Positions 43 and 81 each coordinate dimethylallyl diphosphate. 2 residues coordinate isopentenyl diphosphate: His43 and His81. Cys103 lines the [4Fe-4S] cluster pocket. His131 is a binding site for (2E)-4-hydroxy-3-methylbut-2-enyl diphosphate. His131 provides a ligand contact to dimethylallyl diphosphate. His131 serves as a coordination point for isopentenyl diphosphate. The active-site Proton donor is the Glu133. A (2E)-4-hydroxy-3-methylbut-2-enyl diphosphate-binding site is contributed by Thr172. Cys200 provides a ligand contact to [4Fe-4S] cluster. Residues Ser228, Asn230, and Ser273 each contribute to the (2E)-4-hydroxy-3-methylbut-2-enyl diphosphate site. Residues Ser228, Asn230, and Ser273 each contribute to the dimethylallyl diphosphate site. Isopentenyl diphosphate is bound by residues Ser228, Asn230, and Ser273.

It belongs to the IspH family. It depends on [4Fe-4S] cluster as a cofactor.

It catalyses the reaction isopentenyl diphosphate + 2 oxidized [2Fe-2S]-[ferredoxin] + H2O = (2E)-4-hydroxy-3-methylbut-2-enyl diphosphate + 2 reduced [2Fe-2S]-[ferredoxin] + 2 H(+). The enzyme catalyses dimethylallyl diphosphate + 2 oxidized [2Fe-2S]-[ferredoxin] + H2O = (2E)-4-hydroxy-3-methylbut-2-enyl diphosphate + 2 reduced [2Fe-2S]-[ferredoxin] + 2 H(+). It participates in isoprenoid biosynthesis; dimethylallyl diphosphate biosynthesis; dimethylallyl diphosphate from (2E)-4-hydroxy-3-methylbutenyl diphosphate: step 1/1. The protein operates within isoprenoid biosynthesis; isopentenyl diphosphate biosynthesis via DXP pathway; isopentenyl diphosphate from 1-deoxy-D-xylulose 5-phosphate: step 6/6. Its function is as follows. Catalyzes the conversion of 1-hydroxy-2-methyl-2-(E)-butenyl 4-diphosphate (HMBPP) into a mixture of isopentenyl diphosphate (IPP) and dimethylallyl diphosphate (DMAPP). Acts in the terminal step of the DOXP/MEP pathway for isoprenoid precursor biosynthesis. The sequence is that of 4-hydroxy-3-methylbut-2-enyl diphosphate reductase from Exiguobacterium sibiricum (strain DSM 17290 / CCUG 55495 / CIP 109462 / JCM 13490 / 255-15).